A 132-amino-acid polypeptide reads, in one-letter code: Lectin OAA (132 aa).

2 consecutive repeat copies span residues 1-66 and 67-132. The interval 1 to 132 is 2 X approximate tandem repeats; it reads ALYNVENQWG…GPIGFKGTTL (132 aa).

In terms of assembly, monomer.

In terms of biological role, lectin specific for high mannose N-glycans, recognizes the branched moiety of these glycans. Does not recognize other types of N-glycans or monosaccharides. Agglutinates trypsin-treated rabbit erythrocytes. Does not require divalent cations for activity. Inhibits HIV replication in MT4 cells with an EC(50) of 45 nM. Binds to the HIV envelope glycoprotein gp120. The sequence is that of Lectin OAA from Planktothrix agardhii (Oscillatoria agardhii).